The following is a 1144-amino-acid chain: PAN2-PAN3 deadenylation complex catalytic subunit PAN2 (1144 aa).

4 WD repeats span residues 27–66, 153–193, 196–233, and 302–341; these read KKEK…YTRH, SSTY…VIHS, GHSA…NVYD, and HPCK…SGFT. Residues 344 to 481 are linker; it reads AAVLEYQDYP…LLEYKPSNNI (138 aa). A USP domain is found at 482–887; that stretch reads DIPPAYSKLQ…TPEIVVYSDA (406 aa). The 172-residue stretch at 939–1110 folds into the Exonuclease domain; that stretch reads VALDAEFVSL…EDAHTALLLY (172 aa). Residues D942, E944, D1051, and D1102 each contribute to the a divalent metal cation site.

Belongs to the peptidase C19 family. PAN2 subfamily. As to quaternary structure, forms a heterotrimer with an asymmetric homodimer of the regulatory subunit PAN3 to form the poly(A)-nuclease (PAN) deadenylation complex. The cofactor is a divalent metal cation.

The protein resides in the cytoplasm. It catalyses the reaction Exonucleolytic cleavage of poly(A) to 5'-AMP.. Its activity is regulated as follows. Positively regulated by the regulatory subunit PAN3. In terms of biological role, catalytic subunit of the poly(A)-nuclease (PAN) deadenylation complex, one of two cytoplasmic mRNA deadenylases involved in mRNA turnover. PAN specifically shortens poly(A) tails of RNA and the activity is stimulated by poly(A)-binding protein PAB1. PAN deadenylation is followed by rapid degradation of the shortened mRNA tails by the CCR4-NOT complex. Deadenylated mRNAs are then degraded by two alternative mechanisms, namely exosome-mediated 3'-5' exonucleolytic degradation, or deadenylation-dependent mRNA decaping and subsequent 5'-3' exonucleolytic degradation by XRN1. May also be involved in post-transcriptional maturation of mRNA poly(A) tails. This chain is PAN2-PAN3 deadenylation complex catalytic subunit PAN2, found in Kluyveromyces lactis (strain ATCC 8585 / CBS 2359 / DSM 70799 / NBRC 1267 / NRRL Y-1140 / WM37) (Yeast).